The chain runs to 20 residues: Unknown protein NF009 from 2D-PAGE (20 aa).

The segment at 1–20 (ATSAAQGAALDESVRKVLKP) is disordered.

The sequence is that of Unknown protein NF009 from 2D-PAGE from Naegleria fowleri (Brain eating amoeba).